The following is a 1179-amino-acid chain: Calcium-activated potassium channel subunit alpha-1 (1179 aa).

Residues 1 to 24 (MANGGGGGGGSSGGGGGGGGGGSG) are compositionally biased toward gly residues. Positions 1–62 (MANGGGGGGG…SSSSSSSSSV (62 aa)) are disordered. At 1 to 87 (MANGGGGGGG…VPCDSRGQRM (87 aa)) the chain is on the extracellular side. A compositionally biased stretch (low complexity) spans 41–61 (SSSSSSSSSSSSSSSSSSSSS). The helical transmembrane segment at 88-108 (WWAFLASSMVTFFGGLFIILL) threads the bilayer. The Cytoplasmic segment spans residues 109 to 179 (WRTLKYLWTV…MISAQTLTGR (71 aa)). Residues cysteine 119, cysteine 120, and cysteine 122 are each lipidated (S-palmitoyl cysteine). The chain crosses the membrane as a helical span at residues 180–200 (VLVVLVFALSIGALVIYFIDS). At 201–215 (SNPIESCQNFYKDFT) the chain is on the extracellular side. The chain crosses the membrane as a helical span at residues 216 to 236 (LQIDMAFNVFFLLYFGLRFIA). Over 237–240 (ANDK) the chain is Cytoplasmic. The helical transmembrane segment at 241–261 (LWFWLEVNSVVDFFTVPPVFV) threads the bilayer. Over 262–265 (SVYL) the chain is Extracellular. A helical; Voltage-sensor transmembrane segment spans residues 266 to 286 (NRSWLGLRFLRALRLIQFSEI). At 287–301 (LQFLNILKTSNSIKL) the chain is on the cytoplasmic side. Residues 302–322 (VNLLSIFISTWLTAAGFIHLV) form a helical membrane-spanning segment. Residues 323–336 (ENSGDPWENFQNNQ) are Extracellular-facing. Positions 337-359 (ALTYWECVYLLMVTMSTVGYGDV) form an intramembrane region, pore-forming. The Selectivity for potassium signature appears at 353 to 356 (TVGY). Residues 360–368 (YAKTTLGRL) are Extracellular-facing. A helical membrane pass occupies residues 369–389 (FMVFFILGGLAMFASYVPEII). Over 390–1179 (ELIGNRKKYG…KQKYVQEERL (790 aa)) the chain is Cytoplasmic. Positions 408–550 (RKHIVVCGHI…WNWKEGDDAI (143 aa)) constitute an RCK N-terminal 1 domain. The Mg(2+) site is built by glutamate 440, glutamine 463, and glutamate 465. The interval 557–577 (LGFIAQSCLAQGLSTMLANLF) is segment S7. Positions 614-634 (LSFPTVCELCFVKLKLLMIAI) are segment S8. The interval 678 to 682 (CKACH) is heme-binding motif. A disordered region spans residues 702-730 (EQPSTLSPKKKQRNGGMRNSPNSSPKLMR). Position 706 is a phosphothreonine (threonine 706). A phosphoserine mark is found at serine 708, serine 721, and serine 725. Positions 780–800 (VLSGHVVVCIFGDVSSALIGL) are segment S9. The region spanning 782 to 926 (SGHVVVCIFG…MDRSSPDNSP (145 aa)) is the RCK N-terminal 2 domain. Threonine 913 carries the post-translational modification Phosphothreonine. 2 positions are modified to phosphoserine: serine 921 and serine 925. Residues 946 to 968 (TELVNDTNVQFLDQDDDDDPDTE) carry the Calcium bowl motif. Ca(2+) is bound by residues glutamine 955, aspartate 958, aspartate 961, and aspartate 963. The interval 975–995 (FACGTAFAVSVLDSLMSATYF) is segment S10. Over residues 1129–1154 (RASLSHSSHSSQSSSKKSSSVHSIPS) the composition is skewed to low complexity. Residues 1129–1179 (RASLSHSSHSSQSSSKKSSSVHSIPSTANRQNRPKSRESRDKQKYVQEERL) form a disordered region. The segment covering 1163 to 1179 (KSRESRDKQKYVQEERL) has biased composition (basic and acidic residues). Phosphoserine occurs at positions 1164 and 1167.

The protein belongs to the potassium channel family. Calcium-activated (TC 1.A.1.3) subfamily. KCa1.1/KCNMA1 sub-subfamily. As to quaternary structure, homotetramer; which constitutes the calcium-activated potassium channel. Interacts with beta subunits KCNMB1, KCNMB2, KCNMB3 and KCNMB4. Interacts with gamma subunits LRRC26, LRRC38, LRRC52 and LRRC55. Beta and gamma subunits are accessory, and modulate its activity. Interacts with RAB11B. In terms of processing, phosphorylated. Phosphorylation by kinases such as PKA and/or PKG. In smooth muscles, phosphorylation affects its activity. Palmitoylation by ZDHHC22 and ZDHHC23 within the intracellular linker between the S0 and S1 transmembrane domains regulates localization to the plasma membrane. Depalmitoylated by LYPLA1 and LYPLAL1, leading to retard exit from the trans-Golgi network.

The protein localises to the cell membrane. It localises to the endoplasmic reticulum membrane. It catalyses the reaction K(+)(in) = K(+)(out). With respect to regulation, ethanol and carbon monoxide-bound heme increase channel activation. Heme inhibits channel activation. In terms of biological role, potassium channel activated by both membrane depolarization or increase in cytosolic Ca(2+) that mediates export of K(+). It is also activated by the concentration of cytosolic Mg(2+). Its activation dampens the excitatory events that elevate the cytosolic Ca(2+) concentration and/or depolarize the cell membrane. It therefore contributes to repolarization of the membrane potential. Plays a key role in controlling excitability in a number of systems, such as regulation of the contraction of smooth muscle, the tuning of hair cells in the cochlea, regulation of transmitter release, and innate immunity. In smooth muscles, its activation by high level of Ca(2+), caused by ryanodine receptors in the sarcoplasmic reticulum, regulates the membrane potential. In cochlea cells, its number and kinetic properties partly determine the characteristic frequency of each hair cell and thereby helps to establish a tonotopic map. Kinetics of KCNMA1 channels are determined by alternative splicing, phosphorylation status and its combination with modulating beta subunits. Highly sensitive to both iberiotoxin (IbTx) and charybdotoxin (CTX). Potassium channel activated by both membrane depolarization or increase in cytosolic Ca(2+) that mediates export of K(+). This chain is Calcium-activated potassium channel subunit alpha-1 (KCNMA1), found in Oryctolagus cuniculus (Rabbit).